The chain runs to 159 residues: Cathelicidin-5 (159 aa).

A signal peptide spans 1–29 (METQRASLSLGRWSLWLLLLGLALPSASA). A Pyrrolidone carboxylic acid modification is found at glutamine 30. The propeptide occupies 30 to 131 (QALSYREAVL…DITCAVPQSV (102 aa)). 2 cysteine pairs are disulfide-bonded: cysteine 86–cysteine 97 and cysteine 108–cysteine 125.

This sequence belongs to the cathelicidin family.

The protein resides in the secreted. Functionally, exerts a potent antimicrobial activity against Gram-negative and Gram-positive bacteria, including methicillin-resistant Staphylococcus aureus, and fungi. This chain is Cathelicidin-5 (CATHL5), found in Bos taurus (Bovine).